Reading from the N-terminus, the 210-residue chain is dITP/XTP pyrophosphatase (210 aa).

A substrate-binding site is contributed by 19-24 (SNNPGK). The Mg(2+) site is built by D51 and D80. The Proton acceptor role is filled by D80. Substrate is bound by residues S81, 166 to 169 (FGYD), K189, and 194 to 195 (HR).

This sequence belongs to the HAM1 NTPase family. In terms of assembly, homodimer. The cofactor is Mg(2+).

The enzyme catalyses XTP + H2O = XMP + diphosphate + H(+). It carries out the reaction dITP + H2O = dIMP + diphosphate + H(+). It catalyses the reaction ITP + H2O = IMP + diphosphate + H(+). Functionally, pyrophosphatase that catalyzes the hydrolysis of nucleoside triphosphates to their monophosphate derivatives, with a high preference for the non-canonical purine nucleotides XTP (xanthosine triphosphate), dITP (deoxyinosine triphosphate) and ITP. Seems to function as a house-cleaning enzyme that removes non-canonical purine nucleotides from the nucleotide pool, thus preventing their incorporation into DNA/RNA and avoiding chromosomal lesions. The polypeptide is dITP/XTP pyrophosphatase (Burkholderia mallei (strain ATCC 23344)).